Here is a 427-residue protein sequence, read N- to C-terminus: Glutamate-1-semialdehyde 2,1-aminomutase (427 aa).

Residue Lys-266 is modified to N6-(pyridoxal phosphate)lysine.

This sequence belongs to the class-III pyridoxal-phosphate-dependent aminotransferase family. HemL subfamily. As to quaternary structure, homodimer. The cofactor is pyridoxal 5'-phosphate.

It localises to the cytoplasm. The catalysed reaction is (S)-4-amino-5-oxopentanoate = 5-aminolevulinate. It participates in porphyrin-containing compound metabolism; protoporphyrin-IX biosynthesis; 5-aminolevulinate from L-glutamyl-tRNA(Glu): step 2/2. The polypeptide is Glutamate-1-semialdehyde 2,1-aminomutase (Aromatoleum aromaticum (strain DSM 19018 / LMG 30748 / EbN1) (Azoarcus sp. (strain EbN1))).